A 156-amino-acid polypeptide reads, in one-letter code: ATP synthase subunit b (156 aa).

Residues 7–29 (LLGQAISFLLFVWFCMKFVWPPL) traverse the membrane as a helical segment.

Belongs to the ATPase B chain family. F-type ATPases have 2 components, F(1) - the catalytic core - and F(0) - the membrane proton channel. F(1) has five subunits: alpha(3), beta(3), gamma(1), delta(1), epsilon(1). F(0) has three main subunits: a(1), b(2) and c(10-14). The alpha and beta chains form an alternating ring which encloses part of the gamma chain. F(1) is attached to F(0) by a central stalk formed by the gamma and epsilon chains, while a peripheral stalk is formed by the delta and b chains.

It is found in the cell inner membrane. In terms of biological role, f(1)F(0) ATP synthase produces ATP from ADP in the presence of a proton or sodium gradient. F-type ATPases consist of two structural domains, F(1) containing the extramembraneous catalytic core and F(0) containing the membrane proton channel, linked together by a central stalk and a peripheral stalk. During catalysis, ATP synthesis in the catalytic domain of F(1) is coupled via a rotary mechanism of the central stalk subunits to proton translocation. Its function is as follows. Component of the F(0) channel, it forms part of the peripheral stalk, linking F(1) to F(0). The sequence is that of ATP synthase subunit b from Shewanella pealeana (strain ATCC 700345 / ANG-SQ1).